A 155-amino-acid chain; its full sequence is Phosphopantetheine adenylyltransferase (155 aa).

It belongs to the eukaryotic CoaD family.

It localises to the cytoplasm. The enzyme catalyses (R)-4'-phosphopantetheine + ATP + H(+) = 3'-dephospho-CoA + diphosphate. Its pathway is cofactor biosynthesis; coenzyme A biosynthesis. Its function is as follows. Reversibly transfers an adenylyl group from ATP to 4'-phosphopantetheine, yielding dephospho-CoA (dPCoA) and pyrophosphate. This Pyrobaculum aerophilum (strain ATCC 51768 / DSM 7523 / JCM 9630 / CIP 104966 / NBRC 100827 / IM2) protein is Phosphopantetheine adenylyltransferase.